The following is a 507-amino-acid chain: 3-octaprenyl-4-hydroxybenzoate carboxy-lyase (507 aa).

Asparagine 177 is a binding site for Mn(2+). Residues 180–182 (IYR), 194–196 (RWL), and 199–200 (RG) each bind prenylated FMN. Glutamate 243 contributes to the Mn(2+) binding site. Aspartate 302 serves as the catalytic Proton donor.

Belongs to the UbiD family. Homohexamer. Requires prenylated FMN as cofactor. It depends on Mn(2+) as a cofactor.

The protein localises to the cell membrane. The catalysed reaction is a 4-hydroxy-3-(all-trans-polyprenyl)benzoate + H(+) = a 2-(all-trans-polyprenyl)phenol + CO2. Its pathway is cofactor biosynthesis; ubiquinone biosynthesis. Its function is as follows. Catalyzes the decarboxylation of 3-octaprenyl-4-hydroxy benzoate to 2-octaprenylphenol, an intermediate step in ubiquinone biosynthesis. This Cupriavidus metallidurans (strain ATCC 43123 / DSM 2839 / NBRC 102507 / CH34) (Ralstonia metallidurans) protein is 3-octaprenyl-4-hydroxybenzoate carboxy-lyase.